A 521-amino-acid polypeptide reads, in one-letter code: GMC-type oxidoreductase acuG (521 aa).

Residues 14-15, 34-35, L82, 90-93, A492, and 503-504 each bind FAD; these read TV, EA, NYGL, and YQ.

The protein belongs to the GMC oxidoreductase family. FAD is required as a cofactor.

The protein operates within secondary metabolite biosynthesis. In terms of biological role, GMC-type oxidoreductase; part of the gene cluster that mediates the biosynthesis of aculins. The pathway begins with the synthesis of 6-methylsalicylic acid by the polyketide synthase (PKS) acuA via condensation of acetate and malonate units. The 6-methylsalicylic acid decarboxylase acuB then catalyzes the decarboxylation of 6-methylsalicylic acid to yield m-cresol (also known as 3-methylphenol). These first reactions occur in the cytosol. The intermediate m-cresol is then transported into the endoplasmic reticulum where the cytochrome P450 monooxygenase acuC converts it to m-hydroxybenzyl alcohol, which is further converted to gentisyl alcohol by the cytochrome P450 monooxygenase acuD. Gentisyl alcohol is further oxidized by the oxidoreductase acuE that probably catalyzes hydroxylation of the aromatic ring. The aromatic system might then be opened by oxidation through a Baeyer-Villiger type of oxidation, which could be catalyzed by acuF, with the carboxylic acid at C-1 subsequently reduced to an aldehyde by acuG. Subsequently, a hemiacetal is formed, before the dehydrogenase acuH would reduce the double bond between C-4 and C-6. Finally, keto-enol tautomerism results in formation of aculinic acid, which exists as two diastereomers (both R/S configurations at C-1) by non-enzymatic hemiacetal formation. The carboxypeptidase acuI could be involved in the linking of aculinic acid to an aculene A moiety produced by the aculene biosynthesis cluster and which leads to the production of aculin A. AcuI may also be involved in the attachment of proline to aculinic acid to form epi-aculins A and B. This chain is GMC-type oxidoreductase acuG, found in Aspergillus aculeatus (strain ATCC 16872 / CBS 172.66 / WB 5094).